Consider the following 489-residue polypeptide: MNSTPIEEARSLLNPSNAPTRYAERSVGPFSLAAIWFAMAIQVAIFIAAGQMTSSFQVWQVIVAIAAGCTIAVILLFFTQSAAIRWGINFTVAARMPFGIRGSLIPITLKALLSLFWFGFQTWLGALALDEITRLLTGFTNLPLWIVIFGAIQVVTTFYGITFIRWMNVFASPVLLAMGVYMVYLMLDGADVSLGEVMSMGGENPGMPFSTAIMIFVGGWIAVVVSIHDIVKECKVDPNASREGQTKADARYATAQWLGMVPASIIFGFIGAASMVLVGEWNPVIAITEVVGGVSIPMAILFQVFVLLATWSTNPAANLLSPAYTLCSTFPRVFTFKTGVIVSAVVGLLMMPWQFAGVLNTFLNLLASALGPLAGIMISDYFLVRRRRISLHDLYRTKGIYTYWRGVNWVALAVYAVALAVSFLTPDLMFVTGLIAALLLHIPAMRWVAKTFPLFSEAESRNEDYLRPIGPVAPADESATANTKEQNQR.

12 helical membrane passes run 30-50 (FSLA…IAAG), 58-78 (VWQV…LLFF), 104-124 (LIPI…QTWL), 144-164 (LWIV…ITFI), 167-187 (MNVF…YLML), 207-227 (MPFS…VVSI), 258-278 (LGMV…MVLV), 299-321 (AILF…NLLS), 339-359 (GVIV…AGVL), 362-382 (FLNL…SDYF), 405-424 (RGVN…VSFL), and 428-445 (LMFV…IPAM). Na(+) is bound by residues alanine 38 and isoleucine 41. Glutamine 121 serves as a coordination point for substrate. Residue glycine 219 coordinates substrate. 3 residues coordinate Na(+): alanine 309, serine 312, and threonine 313. Asparagine 318 contacts substrate. Positions 468-489 (PIGPVAPADESATANTKEQNQR) are disordered. Residues 479–489 (ATANTKEQNQR) show a composition bias toward polar residues.

Belongs to the purine-cytosine permease (2.A.39) family.

The protein localises to the membrane. With respect to regulation, inhibited by dinitrophenol, 5-(2-naphthylmethyl)-D-hydantoin (D-NMH), 5-(2-naphthylmethyl)-L-hydantoin (L-NMH), 5-bromovinylhydantoin (BVH) and 5-indolylmethyl-L-hydantoin (L-IMH). The affinity of benzyl-hydantoin is increased over 10-fold in the presence of 15 mM of sodium. In terms of biological role, nucleobase-proton symporter that mediates the sodium-dependent binding and uptake of 5-aryl-substituted hydantoin compounds. 5-indolyl methyl hydantoin and 5-benzyl hydantoin are the preferred substrates, with selectivity for a hydrophobic substituent in position 5 of hydantoin and for the L isomer over the D isomer. This is Hydantoin permease from Microbacterium maritypicum (Microbacterium liquefaciens).